We begin with the raw amino-acid sequence, 21 residues long: Cytoplasmic filament protein A (21 aa).

A disordered region spans residues 1-21 (AILELPQSPNVFHPEKPSAVG).

Its subcellular location is the cytoplasm. Component of the cytoplasmic filaments that run the length of the organism just underneath the cytoplasmic membrane. This is Cytoplasmic filament protein A (cfpA) from Treponema phagedenis.